The following is a 352-amino-acid chain: Adenosine deaminase (352 aa).

A2 carries the post-translational modification N-acetylalanine. Zn(2+) is bound by residues H15 and H17. Substrate-binding residues include H17 and D19. K54 is subject to N6-acetyllysine. Position 184 (G184) interacts with substrate. H214 contacts Zn(2+). The Proton donor role is filled by E217. Residue K232 is modified to N6-acetyllysine. D295 provides a ligand contact to Zn(2+). D296 is a binding site for substrate.

The protein belongs to the metallo-dependent hydrolases superfamily. Adenosine and AMP deaminases family. In terms of assembly, interacts with DPP4 (via extracellular domain). Interacts with PLG (via Kringle 4 domain); the interaction stimulates PLG activation when in complex with DPP4. Requires Zn(2+) as cofactor. In terms of tissue distribution, detected in brain and liver (at protein level).

It is found in the cell membrane. Its subcellular location is the cell junction. The protein resides in the cytoplasmic vesicle lumen. The protein localises to the cytoplasm. It localises to the lysosome. It carries out the reaction adenosine + H2O + H(+) = inosine + NH4(+). It catalyses the reaction 2'-deoxyadenosine + H2O + H(+) = 2'-deoxyinosine + NH4(+). The enzyme catalyses cordycepin + H2O + H(+) = 3'-deoxyinosine + NH4(+). Its function is as follows. Catalyzes the hydrolytic deamination of adenosine and 2-deoxyadenosine. Plays an important role in purine metabolism and in adenosine homeostasis. Modulates signaling by extracellular adenosine, and so contributes indirectly to cellular signaling events. Acts as a positive regulator of T-cell coactivation, by binding DPP4. Its interaction with DPP4 regulates lymphocyte-epithelial cell adhesion. Enhances dendritic cell immunogenicity by affecting dendritic cell costimulatory molecule expression and cytokines and chemokines secretion. Enhances CD4+ T-cell differentiation and proliferation. Acts as a positive modulator of adenosine receptors ADORA1 and ADORA2A, by enhancing their ligand affinity via conformational change. Stimulates plasminogen activation. Plays a role in male fertility. Plays a protective role in early postimplantation embryonic development. Also responsible for the deamination of cordycepin (3'-deoxyadenosine), a fungal natural product that shows antitumor, antibacterial, antifungal, antivirus, and immune regulation properties. The sequence is that of Adenosine deaminase (Ada) from Rattus norvegicus (Rat).